The chain runs to 158 residues: UPF0102 protein GbCGDNIH1_0975 (158 aa).

It belongs to the UPF0102 family.

The protein is UPF0102 protein GbCGDNIH1_0975 of Granulibacter bethesdensis (strain ATCC BAA-1260 / CGDNIH1).